A 552-amino-acid polypeptide reads, in one-letter code: Urocanate hydratase (552 aa).

NAD(+) contacts are provided by residues 49–50 (GG), Gln-127, 173–175 (GMG), Asp-193, 239–240 (NA), 260–264 (QTSAH), 270–271 (YI), and Tyr-319. Cys-407 is a catalytic residue. Gly-489 provides a ligand contact to NAD(+).

Belongs to the urocanase family. NAD(+) is required as a cofactor.

Its subcellular location is the cytoplasm. The enzyme catalyses 4-imidazolone-5-propanoate = trans-urocanate + H2O. Its pathway is amino-acid degradation; L-histidine degradation into L-glutamate; N-formimidoyl-L-glutamate from L-histidine: step 2/3. In terms of biological role, catalyzes the conversion of urocanate to 4-imidazolone-5-propionate. The protein is Urocanate hydratase of Bacillus anthracis (strain CDC 684 / NRRL 3495).